The chain runs to 485 residues: Glutamyl-tRNA(Gln) amidotransferase subunit A (485 aa).

Residues K78 and S153 each act as charge relay system in the active site. The active-site Acyl-ester intermediate is S177.

This sequence belongs to the amidase family. GatA subfamily. Heterotrimer of A, B and C subunits.

It carries out the reaction L-glutamyl-tRNA(Gln) + L-glutamine + ATP + H2O = L-glutaminyl-tRNA(Gln) + L-glutamate + ADP + phosphate + H(+). Functionally, allows the formation of correctly charged Gln-tRNA(Gln) through the transamidation of misacylated Glu-tRNA(Gln) in organisms which lack glutaminyl-tRNA synthetase. The reaction takes place in the presence of glutamine and ATP through an activated gamma-phospho-Glu-tRNA(Gln). The protein is Glutamyl-tRNA(Gln) amidotransferase subunit A of Bacillus cereus (strain Q1).